Consider the following 253-residue polypeptide: Indole-3-glycerol phosphate synthase (253 aa).

This sequence belongs to the TrpC family.

It carries out the reaction 1-(2-carboxyphenylamino)-1-deoxy-D-ribulose 5-phosphate + H(+) = (1S,2R)-1-C-(indol-3-yl)glycerol 3-phosphate + CO2 + H2O. It functions in the pathway amino-acid biosynthesis; L-tryptophan biosynthesis; L-tryptophan from chorismate: step 4/5. In Bacillus cereus (strain ATCC 14579 / DSM 31 / CCUG 7414 / JCM 2152 / NBRC 15305 / NCIMB 9373 / NCTC 2599 / NRRL B-3711), this protein is Indole-3-glycerol phosphate synthase.